The sequence spans 853 residues: DNA mismatch repair protein MutS (853 aa).

Residue Gly-614–Ser-621 coordinates ATP.

Belongs to the DNA mismatch repair MutS family.

This protein is involved in the repair of mismatches in DNA. It is possible that it carries out the mismatch recognition step. This protein has a weak ATPase activity. This chain is DNA mismatch repair protein MutS, found in Enterobacter sp. (strain 638).